A 137-amino-acid chain; its full sequence is ATP synthase epsilon chain (137 aa).

Belongs to the ATPase epsilon chain family. In terms of assembly, F-type ATPases have 2 components, CF(1) - the catalytic core - and CF(0) - the membrane proton channel. CF(1) has five subunits: alpha(3), beta(3), gamma(1), delta(1), epsilon(1). CF(0) has three main subunits: a, b and c.

It is found in the cell membrane. Functionally, produces ATP from ADP in the presence of a proton gradient across the membrane. This is ATP synthase epsilon chain from Streptococcus agalactiae serotype Ia (strain ATCC 27591 / A909 / CDC SS700).